The chain runs to 228 residues: Protein GrpE (228 aa).

Basic and acidic residues predominate over residues 1–22 (MDDKQKTNEEVKASSFDSEKSS). Residues 1–71 (MDDKQKTNEE…DQTNTNNNEL (71 aa)) form a disordered region. A compositionally biased stretch (polar residues) spans 38–53 (QNVQHDNGSNPAQKQN).

Belongs to the GrpE family. Homodimer.

It localises to the cytoplasm. In terms of biological role, participates actively in the response to hyperosmotic and heat shock by preventing the aggregation of stress-denatured proteins, in association with DnaK and GrpE. It is the nucleotide exchange factor for DnaK and may function as a thermosensor. Unfolded proteins bind initially to DnaJ; upon interaction with the DnaJ-bound protein, DnaK hydrolyzes its bound ATP, resulting in the formation of a stable complex. GrpE releases ADP from DnaK; ATP binding to DnaK triggers the release of the substrate protein, thus completing the reaction cycle. Several rounds of ATP-dependent interactions between DnaJ, DnaK and GrpE are required for fully efficient folding. The chain is Protein GrpE from Coprothermobacter proteolyticus (strain ATCC 35245 / DSM 5265 / OCM 4 / BT).